The following is a 606-amino-acid chain: Retrovirus-related Pol polyprotein from type-1 retrotransposable element R2 (606 aa).

Positions 1-208 (GTLANIIMLE…NTFKYLGLTF (208 aa)) constitute a Reverse transcriptase domain. Positions 331–606 (IFNIEGPARS…PPDPPRPVPP (276 aa)) are nucleic acid-binding endonuclease.

It carries out the reaction DNA(n) + a 2'-deoxyribonucleoside 5'-triphosphate = DNA(n+1) + diphosphate. The protein is Retrovirus-related Pol polyprotein from type-1 retrotransposable element R2 of Popillia japonica (Japanese beetle).